A 368-amino-acid polypeptide reads, in one-letter code: D-alanine--D-alanine ligase (368 aa).

The 208-residue stretch at 151–358 (KKLLAAEGLP…YRTLISTLVD (208 aa)) folds into the ATP-grasp domain. 179–234 (KAELGLPVFVKPARGGSSIGITRVSNWDGLDGAIAHARLHDPKVIVEGAIIGREVE) is a binding site for ATP. Mg(2+) is bound by residues aspartate 313, glutamate 325, and asparagine 327.

Belongs to the D-alanine--D-alanine ligase family. The cofactor is Mg(2+). It depends on Mn(2+) as a cofactor.

It localises to the cytoplasm. The catalysed reaction is 2 D-alanine + ATP = D-alanyl-D-alanine + ADP + phosphate + H(+). It participates in cell wall biogenesis; peptidoglycan biosynthesis. Functionally, cell wall formation. The chain is D-alanine--D-alanine ligase from Rhodococcus erythropolis (strain PR4 / NBRC 100887).